We begin with the raw amino-acid sequence, 271 residues long: Ribosomal RNA small subunit methyltransferase A (271 aa).

Residues asparagine 19, leucine 21, glycine 46, glutamate 67, aspartate 92, and asparagine 113 each coordinate S-adenosyl-L-methionine.

It belongs to the class I-like SAM-binding methyltransferase superfamily. rRNA adenine N(6)-methyltransferase family. RsmA subfamily.

Its subcellular location is the cytoplasm. It catalyses the reaction adenosine(1518)/adenosine(1519) in 16S rRNA + 4 S-adenosyl-L-methionine = N(6)-dimethyladenosine(1518)/N(6)-dimethyladenosine(1519) in 16S rRNA + 4 S-adenosyl-L-homocysteine + 4 H(+). Functionally, specifically dimethylates two adjacent adenosines (A1518 and A1519) in the loop of a conserved hairpin near the 3'-end of 16S rRNA in the 30S particle. May play a critical role in biogenesis of 30S subunits. This chain is Ribosomal RNA small subunit methyltransferase A, found in Photobacterium profundum (strain SS9).